A 54-amino-acid chain; its full sequence is Light-harvesting protein B-800/850 alpha chain (54 aa).

Residues 1–14 are Cytoplasmic-facing; that stretch reads MTNGKIWLVVKPTV. Residues 15 to 35 form a helical membrane-spanning segment; sequence GVPLFLSAAVIASVVIHAAVL. Histidine 31 is a binding site for a bacteriochlorophyll. Residues 36–54 lie on the Periplasmic side of the membrane; sequence TTTTWLPAYYQGSAAVAAE.

The protein belongs to the antenna complex alpha subunit family. In terms of assembly, the core complex is formed by different alpha and beta chains, binding bacteriochlorophyll molecules, and arranged most probably in tetrameric structures disposed around the reaction center. The non-pigmented gamma chains may constitute additional components.

It localises to the cell inner membrane. Antenna complexes are light-harvesting systems, which transfer the excitation energy to the reaction centers. The sequence is that of Light-harvesting protein B-800/850 alpha chain (pucA) from Cereibacter sphaeroides (Rhodobacter sphaeroides).